The primary structure comprises 127 residues: Large ribosomal subunit protein bL17 (127 aa).

The protein belongs to the bacterial ribosomal protein bL17 family. As to quaternary structure, part of the 50S ribosomal subunit. Contacts protein L32.

The protein is Large ribosomal subunit protein bL17 of Xanthomonas axonopodis pv. citri (strain 306).